The chain runs to 317 residues: Exopolysaccharide production protein ExoZ (317 aa).

Helical transmembrane passes span 14 to 34 (TIGA…MWVI), 53 to 73 (IVPV…AGLF), 100 to 120 (IWPV…YAVF), 132 to 152 (LPVV…VAFD), 185 to 205 (LAVG…IGVL), 206 to 226 (GLPF…IGVL), and 268 to 288 (IGLG…LIGI).

It belongs to the acyltransferase 3 family.

It localises to the cell membrane. Its function is as follows. Required for the acetyl modification of the third sugar (glucose) of the octasaccharide subunit of succinoglycan (EPS I). This Rhizobium meliloti (strain 1021) (Ensifer meliloti) protein is Exopolysaccharide production protein ExoZ (exoZ).